We begin with the raw amino-acid sequence, 204 residues long: Ras-related protein Rab-1D (204 aa).

GTP is bound by residues 17-25 (GDSGVGKSC), 35-42 (WTDTHIST), 65-69 (DTAGQ), 123-126 (NKTD), and 153-155 (SAK). The short motif at 39–47 (HISTIGVDF) is the Effector region element. Residues 182-191 (PKPDEVDIKS) are compositionally biased toward basic and acidic residues. A disordered region spans residues 182-204 (PKPDEVDIKSKNKTKSGGKKSFC). Basic residues predominate over residues 192 to 204 (KNKTKSGGKKSFC). Cysteine 204 carries S-geranylgeranyl cysteine lipidation.

The protein belongs to the small GTPase superfamily. Rab family.

The protein resides in the cell membrane. This is Ras-related protein Rab-1D (rab1D) from Dictyostelium discoideum (Social amoeba).